The chain runs to 374 residues: NADH-quinone oxidoreductase subunit D 1 (374 aa).

It belongs to the complex I 49 kDa subunit family. NDH-1 is composed of 14 different subunits. Subunits NuoB, C, D, E, F, and G constitute the peripheral sector of the complex.

Its subcellular location is the cell membrane. The enzyme catalyses a quinone + NADH + 5 H(+)(in) = a quinol + NAD(+) + 4 H(+)(out). In terms of biological role, NDH-1 shuttles electrons from NADH, via FMN and iron-sulfur (Fe-S) centers, to quinones in the respiratory chain. The immediate electron acceptor for the enzyme in this species is believed to be ubiquinone. Couples the redox reaction to proton translocation (for every two electrons transferred, four hydrogen ions are translocated across the cytoplasmic membrane), and thus conserves the redox energy in a proton gradient. This Roseiflexus sp. (strain RS-1) protein is NADH-quinone oxidoreductase subunit D 1.